A 354-amino-acid polypeptide reads, in one-letter code: Guanine nucleotide-binding protein alpha-12 subunit (354 aa).

The region spanning 31-354 (QPLKLLLLGS…SLLMNVAEIL (324 aa)) is the G-alpha domain. The tract at residues 34–47 (KLLLLGSGECGKST) is G1 motif. Residues 39 to 46 (GSGECGKS), 178 to 184 (LRVRVKT), 203 to 207 (DVGGQ), 272 to 275 (NKID), and Ala329 contribute to the GTP site. The Mg(2+) site is built by Ser46 and Thr184. The G2 motif stretch occupies residues 176–184 (DFLRVRVKT). The G3 motif stretch occupies residues 199–208 (FKLVDVGGQK). The G4 motif stretch occupies residues 268-275 (VLFFNKID). The tract at residues 327 to 332 (TCALDS) is G5 motif.

The protein belongs to the G-alpha family. In terms of assembly, g proteins are composed of 3 units; alpha, beta and gamma. The alpha chain contains the guanine nucleotide binding site.

Guanine nucleotide-binding proteins (G proteins) are involved as modulators or transducers in various transmembrane signaling systems. The chain is Guanine nucleotide-binding protein alpha-12 subunit (gpaL) from Dictyostelium discoideum (Social amoeba).